A 742-amino-acid polypeptide reads, in one-letter code: Protein-associating with the carboxyl-terminal domain of ezrin (742 aa).

Gly2 carries N-myristoyl glycine lipidation. The Protein kinase domain occupies Gly2–Phe245. HEAT repeat units lie at residues Glu199–Thr238, Leu285–Gly323, Leu333–Gln370, and Gln372–Pro409. Phosphoserine is present on Ser439. 3 disordered regions span residues Leu506–Asn544, Ser568–Glu598, and Gly629–Glu652. Acidic residues predominate over residues Trp529–Glu539. The segment at Trp548–Trp742 is interaction with EZR. The residue at position 707 (Ser707) is a Phosphoserine. The segment at Glu723–Trp742 is disordered.

It belongs to the protein kinase superfamily. Interacts with EZR/VIL2 C-terminal domain. May be myristoylated; myristoylation may target it to Golgi compartment. In terms of processing, phosphorylated. As to expression, ubiquitously expressed.

The protein resides in the cytoplasm. The protein localises to the golgi apparatus. It is found in the cell projection. It localises to the lamellipodium. In terms of biological role, may play a role in regulating cell adhesion/migration complexes in migrating cells. In Homo sapiens (Human), this protein is Protein-associating with the carboxyl-terminal domain of ezrin (SCYL3).